The sequence spans 181 residues: MLKKSKVKEIQEKVYEALKKANIAITPEEKENIEVADFGLGDLENTGLQLLVYVNTDRYCAKELVLFPGQTCPEHRHPPVNGKPGKQETFRCRYGKVYLYVEGEKTENPHCRPPKGSEQYYTVWHEIELNPGEQYTIEPNTLHWFQAGEEGAIVSEFSSHSDDESDIFTDPRIKRIPEIED.

Positions 75, 77, 88, and 143 each coordinate Mn(2+).

It belongs to the D-lyxose ketol-isomerase family. Homodimer. Requires Mn(2+) as cofactor.

It carries out the reaction D-lyxose = D-xylulose. The catalysed reaction is D-mannose = D-fructose. Functionally, sugar isomerase that catalyzes the reversible isomerization of D-lyxose to D-xylulose, and D-mannose to D-fructose. Shows optimum activity using D-lyxose as substrate, but can also effectively catalyze the isomerization between D-fructose and D-mannose. The chain is D-lyxose/D-mannose isomerase from Thermosediminibacter oceani (strain ATCC BAA-1034 / DSM 16646 / JW/IW-1228P).